We begin with the raw amino-acid sequence, 271 residues long: Elongation factor Ts (271 aa).

The segment at 76 to 79 (TDFV) is involved in Mg(2+) ion dislocation from EF-Tu.

Belongs to the EF-Ts family.

It localises to the cytoplasm. In terms of biological role, associates with the EF-Tu.GDP complex and induces the exchange of GDP to GTP. It remains bound to the aminoacyl-tRNA.EF-Tu.GTP complex up to the GTP hydrolysis stage on the ribosome. This Mycolicibacterium gilvum (strain PYR-GCK) (Mycobacterium gilvum (strain PYR-GCK)) protein is Elongation factor Ts.